A 432-amino-acid chain; its full sequence is Ectonucleoside triphosphate diphosphohydrolase 5 (432 aa).

The signal sequence occupies residues 1-24; the sequence is MALYQGAAFFMLVASCVCSTVFHR. E175 (proton acceptor) is an active-site residue. Residue N235 is glycosylated (N-linked (GlcNAc...) asparagine). 2 cysteine pairs are disulfide-bonded: C275–C307 and C367–C381. The N-linked (GlcNAc...) asparagine glycan is linked to N372.

The protein belongs to the GDA1/CD39 NTPase family. As to quaternary structure, monomer; active form. Homodimer; disulfide-linked. Homodimers are enzymatically inactive. Requires Ca(2+) as cofactor. Mg(2+) serves as cofactor. N-glycosylated; high-mannose type.

The protein resides in the endoplasmic reticulum. The protein localises to the secreted. The enzyme catalyses a ribonucleoside 5'-diphosphate + H2O = a ribonucleoside 5'-phosphate + phosphate + H(+). It catalyses the reaction GDP + H2O = GMP + phosphate + H(+). The catalysed reaction is UDP + H2O = UMP + phosphate + H(+). It carries out the reaction IDP + H2O = IMP + phosphate + H(+). The enzyme catalyses CDP + H2O = CMP + phosphate + H(+). It catalyses the reaction ADP + H2O = AMP + phosphate + H(+). It participates in protein modification; protein glycosylation. In terms of biological role, hydrolyzes nucleoside diphosphates with a preference for GDP, IDP and UDP compared to ADP and CDP. In the lumen of the endoplasmic reticulum, hydrolyzes UDP that acts as an end-product feedback inhibitor of the UDP-Glc:glycoprotein glucosyltransferases. UMP can be transported back by an UDP-sugar antiporter to the cytosol where it is consumed to regenerate UDP-glucose. Therefore, it positively regulates protein reglucosylation by clearing UDP from the ER lumen and by promoting the regeneration of UDP-glucose. Protein reglucosylation is essential to proper glycoprotein folding and quality control in the ER. This chain is Ectonucleoside triphosphate diphosphohydrolase 5 (ENTPD5), found in Bos taurus (Bovine).